A 403-amino-acid polypeptide reads, in one-letter code: tRNA methyltransferase 10 homolog C (403 aa).

Residues 1 to 39 constitute a mitochondrion transit peptide; it reads MAAFLKMSVSVNFFRPFTRFLVPFTLHRKRNNLTILQRY. Ser84 is modified (phosphoserine). A coiled-coil region spans residues 138-169; sequence TKEKVKKARQIKKEMKAAAREEAKNIKLLETT. The SAM-dependent MTase TRM10-type domain maps to 191-383; that stretch reads MGWKGAQAMQ…QFVPKRKHTG (193 aa).

Belongs to the class IV-like SAM-binding methyltransferase superfamily. TRM10 family. Component of mitochondrial ribonuclease P, a complex composed of TRMT10C/MRPP1, HSD17B10/MRPP2 and PRORP/MRPP3. Interacts with HSD17B10/MRPP2; forming the MRPP1-MRPP2 subcomplex of the mitochondrial ribonuclease P complex. Interacts with GRSF1.

The protein localises to the mitochondrion matrix. It is found in the mitochondrion nucleoid. The enzyme catalyses adenosine(9) in tRNA + S-adenosyl-L-methionine = N(1)-methyladenosine(9) in tRNA + S-adenosyl-L-homocysteine + H(+). It catalyses the reaction guanosine(9) in tRNA + S-adenosyl-L-methionine = N(1)-methylguanosine(9) in tRNA + S-adenosyl-L-homocysteine + H(+). The catalysed reaction is an adenosine in mRNA + S-adenosyl-L-methionine = an N(1)-methyladenosine in mRNA + S-adenosyl-L-homocysteine + H(+). Its function is as follows. Mitochondrial tRNA N(1)-methyltransferase involved in mitochondrial tRNA maturation. Component of mitochondrial ribonuclease P, a complex composed of TRMT10C/MRPP1, HSD17B10/MRPP2 and PRORP/MRPP3, which cleaves tRNA molecules in their 5'-ends. Together with HSD17B10/MRPP2, forms a subcomplex of the mitochondrial ribonuclease P, named MRPP1-MRPP2 subcomplex, which displays functions that are independent of the ribonuclease P activity. The MRPP1-MRPP2 subcomplex catalyzes the formation of N(1)-methylguanine and N(1)-methyladenine at position 9 (m1G9 and m1A9, respectively) in tRNAs; TRMT10C/MRPP1 acting as the catalytic N(1)-methyltransferase subunit. The MRPP1-MRPP2 subcomplex also acts as a tRNA maturation platform: following 5'-end cleavage by the mitochondrial ribonuclease P complex, the MRPP1-MRPP2 subcomplex enhances the efficiency of 3'-processing catalyzed by ELAC2, retains the tRNA product after ELAC2 processing and presents the nascent tRNA to the mitochondrial CCA tRNA nucleotidyltransferase TRNT1 enzyme. In addition to tRNA N(1)-methyltransferase activity, TRMT10C/MRPP1 also acts as a mRNA N(1)-methyltransferase by mediating methylation of adenosine residues at the N(1) position of MT-ND5 mRNA. Associates with mitochondrial DNA complexes at the nucleoids to initiate RNA processing and ribosome assembly. The polypeptide is tRNA methyltransferase 10 homolog C (Homo sapiens (Human)).